Reading from the N-terminus, the 428-residue chain is MLDIRLFRNEPDTVKSKIELRGDDPKVVDEILELDEQRRKLISATEEMKARRNKVSEEIALKKRNKENADDVIAEMRTLGDDIKEKDSQLNEIDNKMTGILCRIPNLISDDVPQGESDEDNVEVKKWGTPREFSFEPKAHWDIVEELKMADFDRAAKVSGARFVYLTNEGAQLERALMNYMITKHTTQHGYTEMMVPQLVNADTMYGTGQLPKFEEDLFKVEKEGLYTIPTAEVPLTNFYRNEIIQPGVLPEKFTGQSACFRSEAGSAGRDTRGLIRLHQFDKVEMVRFEQPEDSWNALEEMTTNAEAILEELGLPYRRVILCTGDIGFSASKTYDIEVWLPSYNDYKEISSCSNCTDFQARRANIRFKRDKAAKPELAHTLNGSGLAVGRTFAAIVENYQNEDGTVTIPEALVPFMGGKTQISKPVK.

L-serine is bound at residue 231 to 233 (TAE). 262 to 264 (RSE) contacts ATP. Glu-285 provides a ligand contact to L-serine. 349 to 352 (EISS) contacts ATP. An L-serine-binding site is contributed by Ser-385.

This sequence belongs to the class-II aminoacyl-tRNA synthetase family. Type-1 seryl-tRNA synthetase subfamily. Homodimer. The tRNA molecule binds across the dimer.

The protein resides in the cytoplasm. The catalysed reaction is tRNA(Ser) + L-serine + ATP = L-seryl-tRNA(Ser) + AMP + diphosphate + H(+). The enzyme catalyses tRNA(Sec) + L-serine + ATP = L-seryl-tRNA(Sec) + AMP + diphosphate + H(+). It participates in aminoacyl-tRNA biosynthesis; selenocysteinyl-tRNA(Sec) biosynthesis; L-seryl-tRNA(Sec) from L-serine and tRNA(Sec): step 1/1. In terms of biological role, catalyzes the attachment of serine to tRNA(Ser). Is also able to aminoacylate tRNA(Sec) with serine, to form the misacylated tRNA L-seryl-tRNA(Sec), which will be further converted into selenocysteinyl-tRNA(Sec). The protein is Serine--tRNA ligase of Staphylococcus aureus (strain Mu3 / ATCC 700698).